Reading from the N-terminus, the 68-residue chain is Agnoprotein (68 aa).

Over 1–24 the chain is Cytoplasmic; that stretch reads MVLRQLSRQASVKVGKTWTGTKRR. Residues Ser7 and Ser11 each carry the phosphoserine; by host modification. Residue Thr21 is modified to Phosphothreonine; by host. A helical; Signal-anchor for type II membrane protein membrane pass occupies residues 25-41; that stretch reads AQRIFIFILELLLDFCR. The Extracellular portion of the chain corresponds to 42–68; that stretch reads GEDSVDGKKKKDSLTDKTETVTEKKES. The disordered stretch occupies residues 44-68; it reads DSVDGKKKKDSLTDKTETVTEKKES.

Belongs to the polyomavirus agnoprotein family. Homooligomer. Interacts with VP1. Interacts with large T antigen; this interaction may impact upon the activity of T-antigen on the control of viral gene transcription and replication. Interacts with small t antigen. Interacts with host CBX5; this interaction induces the dissociation of CBX5 from LBR, resulting in destabilization of the nuclear envelope. Phosphorylated by host PKC. Phosphorylation alters the stability and may also have an impact on the subcellular location.

Its subcellular location is the host cytoplasm. It localises to the host nucleus membrane. The protein resides in the host rough endoplasmic reticulum membrane. It is found in the host cell membrane. In terms of biological role, alters the structure of the nuclear envelope by interacting with host CBX5 and disrupting CBX5 association with LBR. Involved in the perinuclear-nuclear localization of the capsid protein VP1 during virion assembly and maturation. Plays an important role in the release of progeny virions from infected cells and in viral propagation, probably by acting as a viral ionic channel in the host plasma membrane. Allows influx of extracellular calcium ions in the host cell. May contribute to viral genome transcription and translation of viral late proteins. The chain is Agnoprotein from Simian virus 12 (strain wt100) (SV-12).